A 114-amino-acid chain; its full sequence is Adapter SH3BGRL (114 aa).

The interval 13-50 (SMAIKKKQQDVLGFLEANKIGFEEKDIAANEENRKWMR) is required for interaction with HER2. Residues 54–71 (PENSRPATGYPLPPQIFN) form a required for interaction with PFN1, HER2, and ATG12 region. Residues 61 to 67 (TGYPLPP) carry the SH3-binding motif.

It belongs to the SH3BGR family. As to quaternary structure, monomer. Interacts with PFN1/Profilin-1. Interacts with ERBB2. Interacts with ATG12. Interacts with BECN1. Interacts with translating ribosomes.

The protein localises to the cytoplasm. Its subcellular location is the cytosol. It localises to the cell membrane. Functionally, appears to function as an adapter protein that bridges proteins together or proteins with mRNAs. May function as a ubiquitin ligase-substrate adapter. Additionally, associates with translating cytoplasmic ribosomes and may promote the expression of specific mRNAs. This is Adapter SH3BGRL (SH3BGRL) from Bos taurus (Bovine).